A 545-amino-acid polypeptide reads, in one-letter code: MTNTNRPIRRALVSVFHKEGIEVLAEAFVKAGTEVVSTGSTAKKLAELGVKVTEVSDVTGFPECLDGRVKTLHPYIHAGILADMTNPEHAKQLEEFGIKPFDLVVVNLYPFADTVRSGANEADTIEKIDIGGPSMVRGAAKNHATVAIVTDPADYALVASRVADGTGFSLDERKWLAAKAFAHTAAYDATINEWTAKHWPKPASLDAVEVDKDDQGTEVDSAKFPAQFTRTWDRAHTLRYGENSHQQAALYIDPLNQTGFAHAEQLGGKPMSYNNYVDADAAWRTVWDMAPAIAVAVVKHNNPCGLAIGATAAEAHKKAHACDPMSAYGGVIACNSKVTLEMAESVRPIFTEVIVAPDYEPAALELLQTKKKNLRILKVAEPPKGHEAIRQIDGGLLVQDTDLINAVGDDPDAWKLVAGEAADADTLKDLVFAWRAIRCVKSNAILLAHDQATVGIGMGQVNRVDSCHLAVERANTLADGADRATGAVAASDAFFPFADGAQVLIDAGVKAIVQPGGSIRDEEVIEAAKKAGVTMYLTGTRHFFH.

The MGS-like domain maps to 1-150 (MTNTNRPIRR…KNHATVAIVT (150 aa)).

This sequence belongs to the PurH family.

It carries out the reaction (6R)-10-formyltetrahydrofolate + 5-amino-1-(5-phospho-beta-D-ribosyl)imidazole-4-carboxamide = 5-formamido-1-(5-phospho-D-ribosyl)imidazole-4-carboxamide + (6S)-5,6,7,8-tetrahydrofolate. The enzyme catalyses IMP + H2O = 5-formamido-1-(5-phospho-D-ribosyl)imidazole-4-carboxamide. It participates in purine metabolism; IMP biosynthesis via de novo pathway; 5-formamido-1-(5-phospho-D-ribosyl)imidazole-4-carboxamide from 5-amino-1-(5-phospho-D-ribosyl)imidazole-4-carboxamide (10-formyl THF route): step 1/1. Its pathway is purine metabolism; IMP biosynthesis via de novo pathway; IMP from 5-formamido-1-(5-phospho-D-ribosyl)imidazole-4-carboxamide: step 1/1. This chain is Bifunctional purine biosynthesis protein PurH, found in Bifidobacterium longum (strain DJO10A).